A 232-amino-acid chain; its full sequence is Peptidoglycan-recognition protein LB (232 aa).

The signal sequence occupies residues 1–15 (MTALGLVLLSMMGYS). Positions 53-179 (APYVIIHHSY…RQVRDTECPG (127 aa)) constitute an N-acetylmuramoyl-L-alanine amidase domain. Residue His-59 coordinates Zn(2+). Cys-67 and Cys-73 form a disulfide bridge. 2 residues coordinate Zn(2+): His-169 and Cys-177. The N-linked (GlcNAc...) asparagine glycan is linked to Asn-196. A disordered region spans residues 213 to 232 (HPQAAAPQKPHQSPPAAPKV).

The protein belongs to the N-acetylmuramoyl-L-alanine amidase 2 family. In terms of assembly, monomer. Zn(2+) serves as cofactor. In terms of tissue distribution, widely expressed.

The protein localises to the secreted. The enzyme catalyses Hydrolyzes the link between N-acetylmuramoyl residues and L-amino acid residues in certain cell-wall glycopeptides.. Its function is as follows. N-acetylmuramyl-L-alanine amidase involved in innate immunity by degrading bacterial peptidoglycans (PGN). Probably plays a scavenger role by digesting biologically active PGN into biologically inactive fragments. Has no direct bacteriolytic activity. In Drosophila melanogaster (Fruit fly), this protein is Peptidoglycan-recognition protein LB (PGRP-LB).